A 393-amino-acid polypeptide reads, in one-letter code: Stearoyl-[acyl-carrier-protein] 9-desaturase, chloroplastic (393 aa).

The transit peptide at Met1–Met31 directs the protein to the chloroplast. Fe cation contacts are provided by Glu135, Glu173, His176, Glu226, Glu259, and His262.

This sequence belongs to the fatty acid desaturase type 2 family. As to quaternary structure, homodimer. Fe(2+) serves as cofactor.

The protein localises to the plastid. The protein resides in the chloroplast. The catalysed reaction is octadecanoyl-[ACP] + 2 reduced [2Fe-2S]-[ferredoxin] + O2 + 2 H(+) = (9Z)-octadecenoyl-[ACP] + 2 oxidized [2Fe-2S]-[ferredoxin] + 2 H2O. Its pathway is lipid metabolism; fatty acid metabolism. In terms of biological role, converts stearoyl-ACP to oleoyl-ACP by introduction of a cis double bond between carbons 9 and 10 of the acyl chain. The chain is Stearoyl-[acyl-carrier-protein] 9-desaturase, chloroplastic from Elaeis guineensis var. tenera (Oil palm).